A 224-amino-acid chain; its full sequence is 3-dehydroquinate dehydratase (224 aa).

3-dehydroquinate-binding positions include 35–37 (EFR) and Arg65. The active-site Proton donor/acceptor is the His120. Catalysis depends on Lys146, which acts as the Schiff-base intermediate with substrate. Residues Arg183, Thr202, and Gln206 each contribute to the 3-dehydroquinate site.

Belongs to the type-I 3-dehydroquinase family. Homodimer.

It catalyses the reaction 3-dehydroquinate = 3-dehydroshikimate + H2O. It participates in metabolic intermediate biosynthesis; chorismate biosynthesis; chorismate from D-erythrose 4-phosphate and phosphoenolpyruvate: step 3/7. Involved in the third step of the chorismate pathway, which leads to the biosynthesis of aromatic amino acids. Catalyzes the cis-dehydration of 3-dehydroquinate (DHQ) and introduces the first double bond of the aromatic ring to yield 3-dehydroshikimate. The protein is 3-dehydroquinate dehydratase of Methanobrevibacter smithii (strain ATCC 35061 / DSM 861 / OCM 144 / PS).